The sequence spans 213 residues: 2,3-bisphosphoglycerate-dependent phosphoglycerate mutase (213 aa).

Residues 8 to 15 (RHGQSEWN), 21 to 22 (TG), R58, 84 to 87 (ERNY), K95, 111 to 112 (RR), and 155 to 156 (GN) contribute to the substrate site. The active-site Tele-phosphohistidine intermediate is H9. Catalysis depends on E84, which acts as the Proton donor/acceptor.

This sequence belongs to the phosphoglycerate mutase family. BPG-dependent PGAM subfamily.

The catalysed reaction is (2R)-2-phosphoglycerate = (2R)-3-phosphoglycerate. The protein operates within carbohydrate degradation; glycolysis; pyruvate from D-glyceraldehyde 3-phosphate: step 3/5. Functionally, catalyzes the interconversion of 2-phosphoglycerate and 3-phosphoglycerate. In Cytophaga hutchinsonii (strain ATCC 33406 / DSM 1761 / CIP 103989 / NBRC 15051 / NCIMB 9469 / D465), this protein is 2,3-bisphosphoglycerate-dependent phosphoglycerate mutase.